The chain runs to 220 residues: Ribonuclease HII (220 aa).

One can recognise an RNase H type-2 domain in the interval 27 to 220 (CIIVGVDEVG…SKISYMFKNS (194 aa)). The a divalent metal cation site is built by Asp33, Glu34, and Asp128.

The protein belongs to the RNase HII family. Requires Mn(2+) as cofactor. The cofactor is Mg(2+).

The protein resides in the cytoplasm. It carries out the reaction Endonucleolytic cleavage to 5'-phosphomonoester.. Endonuclease that specifically degrades the RNA of RNA-DNA hybrids. This Ehrlichia ruminantium (strain Gardel) protein is Ribonuclease HII.